The primary structure comprises 367 residues: Peptide chain release factor 2 (367 aa).

Residue glutamine 250 is modified to N5-methylglutamine.

It belongs to the prokaryotic/mitochondrial release factor family. Post-translationally, methylated by PrmC. Methylation increases the termination efficiency of RF2.

The protein localises to the cytoplasm. In terms of biological role, peptide chain release factor 2 directs the termination of translation in response to the peptide chain termination codons UGA and UAA. This Chloroflexus aggregans (strain MD-66 / DSM 9485) protein is Peptide chain release factor 2.